The primary structure comprises 1150 residues: Pyruvate carboxylase (1150 aa).

Residues 3 to 455 (QIKKLLVANR…TTKFIEETPE (453 aa)) enclose the Biotin carboxylation domain. ATP is bound by residues Lys-119, Lys-161, His-211, and Glu-278. Residues 123–319 (RTTAIKADLP…IVKTQILVAA (197 aa)) form the ATP-grasp domain. Residue Arg-294 is part of the active site. Positions 533–802 (VLLTDTTFRD…HLRTDIEGME (270 aa)) constitute a Pyruvate carboxyltransferase domain. 541-545 (RDAHQ) contacts substrate. Residues Asp-542, Lys-712, His-741, and His-743 each contribute to the Mn(2+) site. Lys-712 is subject to N6-carboxylysine. One can recognise a Biotinyl-binding domain in the interval 1071 to 1146 (KADKSNPSHI…ATGDLLIEIE (76 aa)). Lys-1112 carries the N6-biotinyllysine modification.

As to quaternary structure, homotetramer. Biotin serves as cofactor.

The enzyme catalyses hydrogencarbonate + pyruvate + ATP = oxaloacetate + ADP + phosphate + H(+). Catalyzes a 2-step reaction, involving the ATP-dependent carboxylation of the covalently attached biotin in the first step and the transfer of the carboxyl group to pyruvate in the second. The chain is Pyruvate carboxylase (pycA) from Staphylococcus aureus (strain Mu50 / ATCC 700699).